The primary structure comprises 78 residues: Acyl carrier protein (78 aa).

The Carrier domain maps to 2–77 (SDIEQRVKQA…SAIDYVTKKL (76 aa)). Ser37 bears the O-(pantetheine 4'-phosphoryl)serine mark.

The protein belongs to the acyl carrier protein (ACP) family. Post-translationally, 4'-phosphopantetheine is transferred from CoA to a specific serine of apo-ACP by AcpS. This modification is essential for activity because fatty acids are bound in thioester linkage to the sulfhydryl of the prosthetic group.

The protein localises to the cytoplasm. Its pathway is lipid metabolism; fatty acid biosynthesis. Functionally, carrier of the growing fatty acid chain in fatty acid biosynthesis. This Acinetobacter baylyi (strain ATCC 33305 / BD413 / ADP1) protein is Acyl carrier protein.